The sequence spans 366 residues: Peptide chain release factor 2 (366 aa).

Position 251 is an N5-methylglutamine (Gln-251).

This sequence belongs to the prokaryotic/mitochondrial release factor family. In terms of processing, methylated by PrmC. Methylation increases the termination efficiency of RF2.

The protein resides in the cytoplasm. Functionally, peptide chain release factor 2 directs the termination of translation in response to the peptide chain termination codons UGA and UAA. This Exiguobacterium sp. (strain ATCC BAA-1283 / AT1b) protein is Peptide chain release factor 2.